Reading from the N-terminus, the 922-residue chain is Pertactin autotransporter (922 aa).

Positions 1–34 are cleaved as a signal peptide; the sequence is MNMSLSRIVKAAPLRRTTLAMALGALGAAPAAYA. The Cell attachment site; involved in adhesion to various eukaryotic cell lines signature appears at 260 to 262; the sequence is RGD. 3 consecutive repeat copies span residues 266-270, 271-275, and 276-280. The segment at 266–290 is 4 X 5 AA tandem repeats of G-G-A-V-P; that stretch reads GGAVPGGAVPGGAVPGGFGPLLDGW. The stretch at 281–285 is one 4; approximate repeat; it reads GGFGP. The tract at residues 561–619 is disordered; that stretch reads SLVGAKAPPAPKPAPQPGPQPGPQPPQPPQPPQPPQPPQPPQRQPEAPAPQPPAGRELS. The segment covering 568 to 613 has biased composition (pro residues); sequence PPAPKPAPQPGPQPGPQPPQPPQPPQPPQPPQPPQRQPEAPAPQPP. The segment at 575–603 is 9 X 3 AA approximate repeats of P-Q-P; it reads PQPGPQPGPQPPQPPQPPQPPQPPQPPQR. The Autotransporter domain occupies 654-922; it reads LNPDAGGAWG…TFHAGYRYSW (269 aa).

In terms of assembly, monomer.

It is found in the periplasm. It localises to the secreted. The protein localises to the cell surface. The protein resides in the cell outer membrane. Its function is as follows. Agglutinogen that binds to eukaryotic cells; a process mediated by the R-G-D sequence. Pertactin may have a role in bacterial adhesion, and thus play a role in virulence. May contribute to the disease state of whooping cough. In Bordetella parapertussis (strain 12822 / ATCC BAA-587 / NCTC 13253), this protein is Pertactin autotransporter (prn).